The sequence spans 199 residues: GTP cyclohydrolase-2 (199 aa).

Residue 49-53 (RIHSE) coordinates GTP. Zn(2+) contacts are provided by Cys54, Cys65, and Cys67. Residues Gln70, 92–94 (EGR), and Thr114 each bind GTP. The active-site Proton acceptor is Asp126. The Nucleophile role is filled by Arg128. Positions 149 and 154 each coordinate GTP. A disordered region spans residues 172 to 199 (ETGRNPHNSHYLETKRGKLGHLLEGDSE).

Belongs to the GTP cyclohydrolase II family. The cofactor is Zn(2+).

The catalysed reaction is GTP + 4 H2O = 2,5-diamino-6-hydroxy-4-(5-phosphoribosylamino)-pyrimidine + formate + 2 phosphate + 3 H(+). It functions in the pathway cofactor biosynthesis; riboflavin biosynthesis; 5-amino-6-(D-ribitylamino)uracil from GTP: step 1/4. In terms of biological role, catalyzes the conversion of GTP to 2,5-diamino-6-ribosylamino-4(3H)-pyrimidinone 5'-phosphate (DARP), formate and pyrophosphate. This chain is GTP cyclohydrolase-2, found in Teredinibacter turnerae (strain ATCC 39867 / T7901).